The sequence spans 1343 residues: DNA-directed RNA polymerase subunit beta (1343 aa).

This sequence belongs to the RNA polymerase beta chain family. The RNAP catalytic core consists of 2 alpha, 1 beta, 1 beta' and 1 omega subunit. When a sigma factor is associated with the core the holoenzyme is formed, which can initiate transcription.

The enzyme catalyses RNA(n) + a ribonucleoside 5'-triphosphate = RNA(n+1) + diphosphate. Functionally, DNA-dependent RNA polymerase catalyzes the transcription of DNA into RNA using the four ribonucleoside triphosphates as substrates. The protein is DNA-directed RNA polymerase subunit beta of Shewanella frigidimarina (strain NCIMB 400).